The sequence spans 1124 residues: MGWWIFEFKKESKSMFVGVLFLLTLLVWTSESLNSDGQFLLELKNRGFQDSLNRLHNWNGIDETPCNWIGVNCSSQGSSSSSNSLVVTSLDLSSMNLSGIVSPSIGGLVNLVYLNLAYNALTGDIPREIGNCSKLEVMFLNNNQFGGSIPVEINKLSQLRSFNICNNKLSGPLPEEIGDLYNLEELVAYTNNLTGPLPRSLGNLNKLTTFRAGQNDFSGNIPTEIGKCLNLKLLGLAQNFISGELPKEIGMLVKLQEVILWQNKFSGFIPKDIGNLTSLETLALYGNSLVGPIPSEIGNMKSLKKLYLYQNQLNGTIPKELGKLSKVMEIDFSENLLSGEIPVELSKISELRLLYLFQNKLTGIIPNELSKLRNLAKLDLSINSLTGPIPPGFQNLTSMRQLQLFHNSLSGVIPQGLGLYSPLWVVDFSENQLSGKIPPFICQQSNLILLNLGSNRIFGNIPPGVLRCKSLLQLRVVGNRLTGQFPTELCKLVNLSAIELDQNRFSGPLPPEIGTCQKLQRLHLAANQFSSNLPNEISKLSNLVTFNVSSNSLTGPIPSEIANCKMLQRLDLSRNSFIGSLPPELGSLHQLEILRLSENRFSGNIPFTIGNLTHLTELQMGGNLFSGSIPPQLGLLSSLQIAMNLSYNDFSGEIPPEIGNLHLLMYLSLNNNHLSGEIPTTFENLSSLLGCNFSYNNLTGQLPHTQIFQNMTLTSFLGNKGLCGGHLRSCDPSHSSWPHISSLKAGSARRGRIIIIVSSVIGGISLLLIAIVVHFLRNPVEPTAPYVHDKEPFFQESDIYFVPKERFTVKDILEATKGFHDSYIVGRGACGTVYKAVMPSGKTIAVKKLESNREGNNNNSNNTDNSFRAEILTLGKIRHRNIVRLYSFCYHQGSNSNLLLYEYMSRGSLGELLHGGKSHSMDWPTRFAIALGAAEGLAYLHHDCKPRIIHRDIKSNNILIDENFEAHVGDFGLAKVIDMPLSKSVSAVAGSYGYIAPEYAYTMKVTEKCDIYSFGVVLLELLTGKAPVQPLEQGGDLATWTRNHIRDHSLTSEILDPYLTKVEDDVILNHMITVTKIAVLCTKSSPSDRPTMREVVLMLIESGERAGKVIVSTTCSDLPPPAPP.

The first 32 residues, M1–S32, serve as a signal peptide directing secretion. Over L33–R752 the chain is Extracellular. Residues N72, N96, and N131 are each glycosylated (N-linked (GlcNAc...) asparagine). LRR repeat units lie at residues V86–V109, N110–C132, K134–L156, Q158–L180, N182–N205, K206–C228, N230–L252, K254–T277, S278–M300, S302–S325, K326–I348, E350–K371, N374–T397, S398–Y420, P422–Q444, N446–C468, S470–K491, N494–C516, K518–L540, N542–C564, M566–L588, Q590–T613, H614–L636, S638–L661, L663–S686, and S687–Q709. N-linked (GlcNAc...) asparagine glycosylation occurs at N192. Residue N275 is glycosylated (N-linked (GlcNAc...) asparagine). N314 carries N-linked (GlcNAc...) asparagine glycosylation. N-linked (GlcNAc...) asparagine glycosylation is present at N395. Residue N494 is glycosylated (N-linked (GlcNAc...) asparagine). N-linked (GlcNAc...) asparagine glycosylation is present at N547. N611 carries N-linked (GlcNAc...) asparagine glycosylation. 5 N-linked (GlcNAc...) asparagine glycosylation sites follow: N644, N684, N692, N697, and N710. A helical membrane pass occupies residues I753–V773. Residues H774–P1124 lie on the Cytoplasmic side of the membrane. Residues T808 and T816 each carry the phosphothreonine modification. The 282-residue stretch at F819–I1100 folds into the Protein kinase domain. ATP-binding positions include V825–V833 and K847. 2 positions are modified to phosphotyrosine: Y901 and Y939. D952 functions as the Proton acceptor in the catalytic mechanism. S986 bears the Phosphoserine mark. A phosphotyrosine mark is found at Y994 and Y1001. Position 1002 is a phosphothreonine (T1002).

This sequence belongs to the protein kinase superfamily. Ser/Thr protein kinase family.

It is found in the membrane. It catalyses the reaction L-seryl-[protein] + ATP = O-phospho-L-seryl-[protein] + ADP + H(+). The enzyme catalyses L-threonyl-[protein] + ATP = O-phospho-L-threonyl-[protein] + ADP + H(+). The chain is Probable leucine-rich repeat receptor-like protein kinase At2g33170 from Arabidopsis thaliana (Mouse-ear cress).